Consider the following 348-residue polypeptide: 4-hydroxy-2-oxovalerate aldolase (348 aa).

Residues 9–261 (ITVHDMTLRD…RTGVDVWKIQ (253 aa)) form the Pyruvate carboxyltransferase domain. 17 to 18 (RD) is a substrate binding site. Residue aspartate 18 participates in Mn(2+) binding. Residue histidine 21 is the Proton acceptor of the active site. Substrate is bound by residues serine 171 and histidine 200. The Mn(2+) site is built by histidine 200 and histidine 202. Tyrosine 291 lines the substrate pocket.

It belongs to the 4-hydroxy-2-oxovalerate aldolase family.

It catalyses the reaction (S)-4-hydroxy-2-oxopentanoate = acetaldehyde + pyruvate. The chain is 4-hydroxy-2-oxovalerate aldolase from Ralstonia pickettii (strain 12J).